We begin with the raw amino-acid sequence, 835 residues long: Phenylalanine--tRNA ligase beta subunit (835 aa).

Positions 44 to 160 (PATTGPLVLG…ESGQPGDDAR (117 aa)) constitute a tRNA-binding domain. Positions 419 to 494 (PTMPSITMPV…RLEGLEAIPT (76 aa)) constitute a B5 domain. Residues aspartate 472, aspartate 478, glutamate 481, and glutamate 482 each coordinate Mg(2+). Residues 741 to 834 (SAFPALHQDI…AKERLGAEMR (94 aa)) form the FDX-ACB domain.

It belongs to the phenylalanyl-tRNA synthetase beta subunit family. Type 1 subfamily. Tetramer of two alpha and two beta subunits. Requires Mg(2+) as cofactor.

The protein resides in the cytoplasm. It catalyses the reaction tRNA(Phe) + L-phenylalanine + ATP = L-phenylalanyl-tRNA(Phe) + AMP + diphosphate + H(+). The chain is Phenylalanine--tRNA ligase beta subunit from Corynebacterium efficiens (strain DSM 44549 / YS-314 / AJ 12310 / JCM 11189 / NBRC 100395).